A 152-amino-acid chain; its full sequence is MKAVIQRVSEARVEVDGSTVGAIGRGILVLLGVEKGDTERDAAWLAEKMAGLRIFEDDAGKMNLSVREVEGSILAVSQFTLAGNCAKGRRPSFDTAAPPDEGKRLYDRFVDLIRETGIPTATGIFQADMKVHLVNDGPVTFILDTKSRSSST.

The Gly-cisPro motif, important for rejection of L-amino acids motif lies at 137 to 138; the sequence is GP.

It belongs to the DTD family. In terms of assembly, homodimer.

It localises to the cytoplasm. The enzyme catalyses glycyl-tRNA(Ala) + H2O = tRNA(Ala) + glycine + H(+). It carries out the reaction a D-aminoacyl-tRNA + H2O = a tRNA + a D-alpha-amino acid + H(+). Functionally, an aminoacyl-tRNA editing enzyme that deacylates mischarged D-aminoacyl-tRNAs. Also deacylates mischarged glycyl-tRNA(Ala), protecting cells against glycine mischarging by AlaRS. Acts via tRNA-based rather than protein-based catalysis; rejects L-amino acids rather than detecting D-amino acids in the active site. By recycling D-aminoacyl-tRNA to D-amino acids and free tRNA molecules, this enzyme counteracts the toxicity associated with the formation of D-aminoacyl-tRNA entities in vivo and helps enforce protein L-homochirality. The polypeptide is D-aminoacyl-tRNA deacylase (Geobacter sulfurreducens (strain ATCC 51573 / DSM 12127 / PCA)).